An 83-amino-acid polypeptide reads, in one-letter code: Colicin-E5 immunity protein in ColE9 (83 aa).

The sequence is that of Colicin-E5 immunity protein in ColE9 from Escherichia coli.